We begin with the raw amino-acid sequence, 313 residues long: Endo-beta-N-acetylglucosaminidase H (313 aa).

The or 44 signal peptide spans 1–42 (MFTPVRRRVRTAALALSAAAALVLGSTAASGASATPSPAPAP). In terms of domain architecture, GH18 spans 51-307 (PTSVAYVEVN…SAFTRELYGS (257 aa)). E174 (proton donor) is an active-site residue.

The protein belongs to the glycosyl hydrolase 18 family.

It catalyses the reaction an N(4)-(oligosaccharide-(1-&gt;3)-[oligosaccharide-(1-&gt;6)]-beta-D-Man-(1-&gt;4)-beta-D-GlcNAc-(1-&gt;4)-alpha-D-GlcNAc)-L-asparaginyl-[protein] + H2O = an oligosaccharide-(1-&gt;3)-[oligosaccharide-(1-&gt;6)]-beta-D-Man-(1-&gt;4)-D-GlcNAc + N(4)-(N-acetyl-beta-D-glucosaminyl)-L-asparaginyl-[protein]. Its function is as follows. Cleaves asparagine-linked oligomannose and hybrid, but not complex, oligosaccharides from glycoproteins. This is Endo-beta-N-acetylglucosaminidase H from Streptomyces plicatus.